A 259-amino-acid polypeptide reads, in one-letter code: Bacillaene synthase dehydratase PksH (259 aa).

Active-site residues include Asp68 and Glu137.

This sequence belongs to the enoyl-CoA hydratase/isomerase family.

The protein localises to the cytoplasm. It functions in the pathway antibiotic biosynthesis; bacillaene biosynthesis. Its function is as follows. Involved in some intermediate steps for the synthesis of the antibiotic polyketide bacillaene which is involved in secondary metabolism. Catalyzes the dehydration of the (S)-3-hydroxy-3-methylglutaryl group tethered to PksL to a 3-methylglutaconyl moiety. The chain is Bacillaene synthase dehydratase PksH (pksH) from Bacillus subtilis (strain 168).